The following is a 288-amino-acid chain: Dysbindin protein homolog (288 aa).

Residues 147 to 239 (AQLQNSSQVL…QRERQAVFDD (93 aa)) adopt a coiled-coil conformation.

This sequence belongs to the dysbindin family. Component of the biogenesis of lysosome-related organelles complex-1 (BLOC-1) composed of Blos1, Blos2, Blos3, Blos4, Dysb, Muted, Pldn and Snapin. Interacts with Pldn and Snapin.

Component of the biogenesis of lysosome-related organelles complex-1 (BLOC-1) involved in pigment granule biogenesis and membrane trafficking in synapses. In response to high synaptic activity at neuromuscular junctions, stabilizes Pldn protein levels and, together with Pldn, plays a role in promoting efficient synaptic vesicle recycling and re-formation through early endosomes. This chain is Dysbindin protein homolog, found in Drosophila melanogaster (Fruit fly).